We begin with the raw amino-acid sequence, 628 residues long: Kinesin-like protein tea2 (628 aa).

Residues 2 to 122 (SSSSSKPVNT…TTSQQTNSKG (121 aa)) are interaction with mal3. A Phosphoserine modification is found at serine 82. In terms of domain architecture, Kinesin motor spans 132 to 460 (GIITSIRIRP…LKFASRAQNL (329 aa)). An ATP-binding site is contributed by 218-225 (GMTGTGKT). Residues 530–557 (LRMEELLSDHNFEIADLRDELQDKEQII) adopt a coiled-coil conformation. A disordered region spans residues 588–628 (VTRGSRSSSDQFSNETKTEILPDDQQQSKKDSVTQETQLLS). Over residues 589–602 (TRGSRSSSDQFSNE) the composition is skewed to polar residues. Basic and acidic residues predominate over residues 603-620 (TKTEILPDDQQQSKKDSV).

It belongs to the TRAFAC class myosin-kinesin ATPase superfamily. Kinesin family. In terms of assembly, interacts with mal3 and tip1.

Its subcellular location is the cytoplasm. The protein resides in the cytoskeleton. Its function is as follows. Promotes microtubule growth, possibly through interactions with the microtubule end, and is important for establishing and maintaining polarized growth along the long axis of the cell. Acts as a kinesin motor protein that moves along microtubules and is required for proper localization of tea1 and tip1 to the cell tips and microtubules, respectively. ATPase activity stimulated via interaction with mal3. The sequence is that of Kinesin-like protein tea2 from Schizosaccharomyces pombe (strain 972 / ATCC 24843) (Fission yeast).